The chain runs to 211 residues: N-(5'-phosphoribosyl)anthranilate isomerase (211 aa).

The protein belongs to the TrpF family.

The enzyme catalyses N-(5-phospho-beta-D-ribosyl)anthranilate = 1-(2-carboxyphenylamino)-1-deoxy-D-ribulose 5-phosphate. It functions in the pathway amino-acid biosynthesis; L-tryptophan biosynthesis; L-tryptophan from chorismate: step 3/5. The polypeptide is N-(5'-phosphoribosyl)anthranilate isomerase (Chromohalobacter salexigens (strain ATCC BAA-138 / DSM 3043 / CIP 106854 / NCIMB 13768 / 1H11)).